The primary structure comprises 493 residues: Xaa-Pro dipeptidase (493 aa).

Residue Ala-2 is modified to N-acetylalanine. Ser-167 bears the Phosphoserine mark. His-255 contacts a dipeptide. Positions 276, 287, and 370 each coordinate Mn(2+). Asp-287 provides a ligand contact to a dipeptide. A dipeptide contacts are provided by His-377 and Arg-398. Residues Glu-412 and Glu-452 each coordinate Mn(2+).

Belongs to the peptidase M24B family. Eukaryotic-type prolidase subfamily. As to quaternary structure, homodimer. The cofactor is Mn(2+).

The catalysed reaction is Xaa-L-Pro dipeptide + H2O = an L-alpha-amino acid + L-proline. Its activity is regulated as follows. Specifically inhibited by the pseudodipeptide CQ31. Inhibition by CQ31 indirectly activates the CARD8 inflammasome: dipeptide accumulation following PEPD inactivation weaky inhibit dipeptidyl peptidases DDP8 and DPP9, relieving DPP8- and/or DPP9-mediated inhibition of CARD8. In terms of biological role, dipeptidase that catalyzes the hydrolysis of dipeptides with a prolyl (Xaa-Pro) or hydroxyprolyl residue in the C-terminal position. The preferred dipeptide substrate is Gly-Pro, but other Xaa-Pro dipeptides, such as Ala-Pro, Met-Pro, Phe-Pro, Val-Pro and Leu-Pro, can be cleaved. Plays an important role in collagen metabolism because the high level of iminoacids in collagen. The protein is Xaa-Pro dipeptidase of Homo sapiens (Human).